The chain runs to 303 residues: Hydroxyethylthiazole kinase (303 aa).

Residues 1–15 (MTTASTTPNSDTSNL) show a composition bias toward polar residues. Residues 1–23 (MTTASTTPNSDTSNLHEVAPDDP) form a disordered region. Met-67 is a substrate binding site. ATP-binding residues include Arg-142 and Ser-206. Gly-233 provides a ligand contact to substrate.

It belongs to the Thz kinase family. Requires Mg(2+) as cofactor.

It catalyses the reaction 5-(2-hydroxyethyl)-4-methylthiazole + ATP = 4-methyl-5-(2-phosphooxyethyl)-thiazole + ADP + H(+). It participates in cofactor biosynthesis; thiamine diphosphate biosynthesis; 4-methyl-5-(2-phosphoethyl)-thiazole from 5-(2-hydroxyethyl)-4-methylthiazole: step 1/1. In terms of biological role, catalyzes the phosphorylation of the hydroxyl group of 4-methyl-5-beta-hydroxyethylthiazole (THZ). In Bifidobacterium animalis subsp. lactis (strain AD011), this protein is Hydroxyethylthiazole kinase.